The primary structure comprises 162 residues: Lipoprotein signal peptidase (162 aa).

4 consecutive transmembrane segments (helical) span residues 12–32 (WFALAALVIVLDQISKLYFNS), 42–62 (VVEGFFNFTLVYNPGAAFSFL), 66–86 (GGWQKYLFTILAFAVSGWLGW), and 93–113 (FSGLMNLAAAFIMGGALGNVI). Active-site residues include aspartate 123 and aspartate 142. Residues 133 to 153 (WYYPAFNLADSFICVGAALMV) form a helical membrane-spanning segment.

Belongs to the peptidase A8 family.

The protein resides in the cell inner membrane. It catalyses the reaction Release of signal peptides from bacterial membrane prolipoproteins. Hydrolyzes -Xaa-Yaa-Zaa-|-(S,diacylglyceryl)Cys-, in which Xaa is hydrophobic (preferably Leu), and Yaa (Ala or Ser) and Zaa (Gly or Ala) have small, neutral side chains.. It participates in protein modification; lipoprotein biosynthesis (signal peptide cleavage). This protein specifically catalyzes the removal of signal peptides from prolipoproteins. This chain is Lipoprotein signal peptidase, found in Chromobacterium violaceum (strain ATCC 12472 / DSM 30191 / JCM 1249 / CCUG 213 / NBRC 12614 / NCIMB 9131 / NCTC 9757 / MK).